The chain runs to 212 residues: GTP-binding nuclear protein Ran (212 aa).

The region spanning 3 to 167 (EKEQIKLVLV…VWLTSKLLGN (165 aa)) is the Small GTPase Ran-type domain. 14-21 (DGGVGKTT) contacts GTP. Residues 33–41 (PRYIPTLGV) form a switch-I region. Residues glycine 64, 118-121 (NKVD), and 146-148 (SAK) contribute to the GTP site. Residues 64–80 (GQEKFGGLRDGYYIQGN) are switch-II.

Belongs to the small GTPase superfamily. Ran family. As to quaternary structure, found in a nuclear export complex with RanGTP, exportin and pre-miRNA.

The protein resides in the nucleus. In terms of biological role, GTP-binding protein involved in nucleocytoplasmic transport. Required for the import of protein into the nucleus and also for RNA export. Involved in chromatin condensation and control of cell cycle. The chain is GTP-binding nuclear protein Ran (ranA) from Dictyostelium discoideum (Social amoeba).